An 898-amino-acid polypeptide reads, in one-letter code: Cilium assembly protein DZIP1 (898 aa).

Residues 14-66 are disordered; sequence DPPGTHSSAGIPSLLSSPQSQPSSGSQSRPAPSTMSGPLTSSGASTSIPPPFK. Positions 25 to 46 are enriched in low complexity; it reads PSLLSSPQSQPSSGSQSRPAPS. Residues 47–60 are compositionally biased toward polar residues; it reads TMSGPLTSSGASTS. A coiled-coil region spans residues 145–197; sequence LSISLQAAEERLLAEAREREQICVQLQKKTQDAKALKEELKQRKKIIASQQAM. The segment at 207–230 adopts a C2H2-type zinc-finger fold; the sequence is HKCQHCEKAFMNASFLQSHMQRRH. Coiled coils occupy residues 242–353 and 407–447; these read NQKK…VQTQ and SAVS…ISSK. Residues 435-463 show a composition bias toward polar residues; the sequence is TSQNKQMKQISSKPPTITVQREGVSTPSP. Disordered stretches follow at residues 435–509, 585–739, and 773–878; these read TSQN…SWQK, EQRV…WTDG, and KSLE…DAGT. Residues 495–505 show a composition bias toward low complexity; that stretch reads SSISESPTENR. Residues 573–590 adopt a coiled-coil conformation; that stretch reads YRRALKEISHKLEQRVKE. A compositionally biased stretch (polar residues) spans 605–652; that stretch reads VVQSRPRSSSFPSTVTRVMSGPASKQQRTPQPVPRSRTNVPHKTSTPL. The span at 662-684 shows a compositional bias: acidic residues; the sequence is SDEDSSEEEEEEEEEEESSDEES. Composition is skewed to polar residues over residues 685–715 and 723–734; these read PQMQ…QSVR and AEPTNVTTLSDS. A compositionally biased stretch (basic and acidic residues) spans 797–815; sequence KPTDVRNTRQNAKKELKYS. A compositionally biased stretch (acidic residues) spans 816-826; sequence DDDDDDDDDWD. Positions 855-866 are enriched in polar residues; the sequence is DTSTSVWGSSTG.

Belongs to the DZIP C2H2-type zinc-finger protein family. As to expression, expressed throughout the embryo starting at 12 hours.

The protein resides in the cell projection. The protein localises to the cilium. Its subcellular location is the cytoplasm. It localises to the cytoskeleton. It is found in the cilium basal body. The protein resides in the microtubule organizing center. The protein localises to the centrosome. Its subcellular location is the centriole. It localises to the nucleus. Functionally, molecular adapter that recruits protein complexes required for cilium assembly and function to the cilium basal body. Required for establishment of left-right asymmetry during embryogenesis. Acts as a permissive factor that is required for the proper regulation of Hedgehog (Hh) target genes in response to Hh signals. Acts downstream of the Smoothened protein to modulate Gli activity in the somites of the developing embryo. This is Cilium assembly protein DZIP1 (dzip1) from Danio rerio (Zebrafish).